The primary structure comprises 360 residues: Ferrochelatase (360 aa).

Positions 210 and 291 each coordinate Fe cation.

This sequence belongs to the ferrochelatase family.

The protein localises to the cytoplasm. The enzyme catalyses heme b + 2 H(+) = protoporphyrin IX + Fe(2+). Its pathway is porphyrin-containing compound metabolism; protoheme biosynthesis; protoheme from protoporphyrin-IX: step 1/1. Functionally, catalyzes the ferrous insertion into protoporphyrin IX. The polypeptide is Ferrochelatase (Pseudoalteromonas atlantica (strain T6c / ATCC BAA-1087)).